Here is a 121-residue protein sequence, read N- to C-terminus: Large ribosomal subunit protein bL20 (121 aa).

This sequence belongs to the bacterial ribosomal protein bL20 family.

Binds directly to 23S ribosomal RNA and is necessary for the in vitro assembly process of the 50S ribosomal subunit. It is not involved in the protein synthesizing functions of that subunit. The chain is Large ribosomal subunit protein bL20 from Petrotoga mobilis (strain DSM 10674 / SJ95).